Here is an 89-residue protein sequence, read N- to C-terminus: Small ribosomal subunit protein uS14A (89 aa).

Residues 29–62 form a disordered region; sequence AAGDRTALAKLPRDSNPNRLRLRDQTDGRPRGYM. Over residues 49-58 the composition is skewed to basic and acidic residues; it reads RLRDQTDGRP.

This sequence belongs to the universal ribosomal protein uS14 family. In terms of assembly, part of the 30S ribosomal subunit. Contacts proteins S3 and S10.

Functionally, binds 16S rRNA, required for the assembly of 30S particles and may also be responsible for determining the conformation of the 16S rRNA at the A site. This chain is Small ribosomal subunit protein uS14A, found in Enterococcus faecalis (strain ATCC 700802 / V583).